The chain runs to 660 residues: Anoctamin-10 (660 aa).

The Cytoplasmic portion of the chain corresponds to 1–207 (MKVTLSALDT…DSIRGYFGET (207 aa)). Residues 208–228 (IALYFGFLEYFTFALIPMAVI) traverse the membrane as a helical segment. Over 229 to 240 (GLPYYLFVWEDY) the chain is Extracellular. Residues 241–261 (DKYVIFASFNLIWSTVILELW) traverse the membrane as a helical segment. Residues 262 to 316 (KRGCANMTYRWGTLLMKRKFEEPRPGFHGVLGINSITGKEEPLYPSYKRQLRIYL) lie on the Cytoplasmic side of the membrane. The helical transmembrane segment at 317–337 (VSLPFVCLCLYFSLYVMMIYF) threads the bilayer. Over 338–352 (DMEVWALGLHENSGS) the chain is Extracellular. Residues 353 to 373 (EWTSVLLYVPSIIYAIVIEIM) form a helical membrane-spanning segment. The Cytoplasmic portion of the chain corresponds to 374–400 (NRLYRYAAEFLTSWENHRLESAYQNHL). Residues 401–421 (ILKVLVFNFLNCFASLFYIAF) traverse the membrane as a helical segment. Over 422 to 500 (VLKDMKLLRQ…YLGTFDDYLE (79 aa)) the chain is Extracellular. A helical membrane pass occupies residues 501 to 521 (LFLQFGYVSLFSCVYPLAAAF). The Cytoplasmic segment spans residues 522–553 (AVLNNFTEVNSDALKMCRVFKRPFSEPSANIG). A helical membrane pass occupies residues 554–574 (VWQLAFETMSVISVVTNCALI). At 575–590 (GMSPQVNAVFPESKAD) the chain is on the extracellular side. The chain crosses the membrane as a helical span at residues 591–611 (LILIVVAVEHALLALKFILAF). The Cytoplasmic portion of the chain corresponds to 612–660 (AIPDKPRHIQMKLARLEFESLEALKQQQMKLVTENLKEEPMESGKEKAT).

Belongs to the anoctamin family. In terms of tissue distribution, highly expressed in the brain. Intermediate levels in the retina and heart and low levels in the placenta, liver, lung, duodenum, kidney, testis and spleen. In brain areas, highest expression in the frontal and occipital cortices and in the cerebellum. Lower expression in the fetal brain than in the adult brain.

It is found in the cell membrane. In terms of biological role, does not exhibit calcium-activated chloride channel (CaCC) activity. Can inhibit the activity of ANO1. This is Anoctamin-10 (ANO10) from Homo sapiens (Human).